A 184-amino-acid chain; its full sequence is Ribosome-recycling factor (184 aa).

It belongs to the RRF family.

The protein resides in the cytoplasm. Functionally, responsible for the release of ribosomes from messenger RNA at the termination of protein biosynthesis. May increase the efficiency of translation by recycling ribosomes from one round of translation to another. The polypeptide is Ribosome-recycling factor (Stenotrophomonas maltophilia (strain R551-3)).